Here is a 361-residue protein sequence, read N- to C-terminus: Glutaminyl-peptide cyclotransferase (361 aa).

A signal peptide spans Met1 to Gly28. The N-linked (GlcNAc...) asparagine glycan is linked to Asn49. Cysteines 139 and 164 form a disulfide. Asp159 contacts Zn(2+). N-linked (GlcNAc...) asparagine glycosylation is present at Asn183. Glu201 (proton acceptor) is an active-site residue. Residue Glu202 participates in Zn(2+) binding. Asp248 acts as the Proton acceptor in catalysis. A Zn(2+)-binding site is contributed by His330.

This sequence belongs to the glutaminyl-peptide cyclotransferase family. Expressed mainly in brain tissue.

It localises to the secreted. It catalyses the reaction N-terminal L-glutaminyl-[peptide] = N-terminal 5-oxo-L-prolyl-[peptide] + NH4(+). Responsible for the biosynthesis of pyroglutamyl peptides. Has a bias against acidic and tryptophan residues adjacent to the N-terminal glutaminyl residue and a lack of importance of chain length after the second residue. Also catalyzes N-terminal pyroglutamate formation. This Bos taurus (Bovine) protein is Glutaminyl-peptide cyclotransferase (QPCT).